Consider the following 687-residue polypeptide: Polyphosphate kinase (687 aa).

An ATP-binding site is contributed by asparagine 45. Arginine 375 and arginine 405 together coordinate Mg(2+). The Phosphohistidine intermediate role is filled by histidine 435. 3 residues coordinate ATP: tyrosine 472, arginine 568, and histidine 596.

The protein belongs to the polyphosphate kinase 1 (PPK1) family. Mg(2+) is required as a cofactor. An intermediate of this reaction is the autophosphorylated ppk in which a phosphate is covalently linked to a histidine residue through a N-P bond.

It carries out the reaction [phosphate](n) + ATP = [phosphate](n+1) + ADP. In terms of biological role, catalyzes the reversible transfer of the terminal phosphate of ATP to form a long-chain polyphosphate (polyP). This Burkholderia vietnamiensis (strain G4 / LMG 22486) (Burkholderia cepacia (strain R1808)) protein is Polyphosphate kinase.